Here is a 985-residue protein sequence, read N- to C-terminus: Ephrin type-A receptor 4-B (985 aa).

Positions 1–20 are cleaved as a signal peptide; the sequence is MAGIVHGILFCGLFGLCWAV. Over 21–547 the chain is Extracellular; that stretch reads TGSRIYPASE…MIGEGTSPTV (527 aa). The region spanning 30–209 is the Eph LBD domain; the sequence is EVTLLDSRSV…FYKKCPLTVR (180 aa). 2 consecutive Fibronectin type-III domains span residues 328–438 and 439–536; these read PPSA…TNQA and APST…TVPS. N-linked (GlcNAc...) asparagine glycosylation is found at N340 and N407. Residues 548-569 form a helical membrane-spanning segment; sequence LLVSVAGSIVLVVILIAAFVIS. At 570–985 the chain is on the cytoplasmic side; it reads RRRSKYSKAK…QQMQGRMVPV (416 aa). Phosphotyrosine; by autocatalysis is present on residues Y595 and Y601. Residues 620–881 form the Protein kinase domain; it reads IKIEKVIGVG…QIVSMLDKLI (262 aa). Residues 626-634 and K652 each bind ATP; that span reads IGVGEFGEV. The active-site Proton acceptor is the D745. 2 positions are modified to phosphotyrosine; by autocatalysis: Y778 and Y927. In terms of domain architecture, SAM spans 910 to 974; the sequence is SQVASVLDWL…LSSVQGMRTQ (65 aa). The PDZ-binding signature appears at 983 to 985; that stretch reads VPV.

This sequence belongs to the protein kinase superfamily. Tyr protein kinase family. Ephrin receptor subfamily. As to expression, localized expression in a subset of neural crest and neural tissues in embryos.

The protein localises to the cell membrane. The protein resides in the early endosome. It carries out the reaction L-tyrosyl-[protein] + ATP = O-phospho-L-tyrosyl-[protein] + ADP + H(+). Functionally, receptor tyrosine kinase which binds membrane-bound ephrin family ligands residing on adjacent cells, leading to contact-dependent bidirectional signaling into neighboring cells. The signaling pathway downstream of the receptor is referred to as forward signaling while the signaling pathway downstream of the ephrin ligand is referred to as reverse signaling. Highly promiscuous, it has the unique property among Eph receptors to bind and to be physiologically activated by both GPI-anchored ephrin-A and transmembrane ephrin-B ligands including EFNA1 and EFNB3. Upon activation by ephrin ligands, modulates cell morphology and integrin-dependent cell adhesion through regulation of the Rac, Rap and Rho GTPases activity. Plays an important role in the development of the nervous system controlling different steps of axonal guidance including the establishment of the corticospinal projections. In Xenopus laevis (African clawed frog), this protein is Ephrin type-A receptor 4-B (epha4-b).